The following is a 510-amino-acid chain: NAD(P)H-quinone oxidoreductase subunit 2 A, chloroplastic (510 aa).

The next 14 membrane-spanning stretches (helical) occupy residues 31–51 (FIFP…IDLT), 59–79 (WFYF…LFRW), 99–119 (IFQF…VEYI), 124–144 (MAIT…MFLC), 149–169 (LITI…LSGY), 184–204 (LLMG…LYGL), 229–249 (ISIA…LAPF), 261–281 (PTPV…ALAT), 295–315 (WHLL…LLAI), 323–343 (MLAY…IVGD), 354–374 (YMLF…LFGL), 395–415 (ALSL…AGFF), 418–438 (LYLF…IGLL), and 484–504 (MTVC…ILAI).

The protein belongs to the complex I subunit 2 family. As to quaternary structure, NDH is composed of at least 16 different subunits, 5 of which are encoded in the nucleus.

Its subcellular location is the plastid. The protein resides in the chloroplast thylakoid membrane. The catalysed reaction is a plastoquinone + NADH + (n+1) H(+)(in) = a plastoquinol + NAD(+) + n H(+)(out). It catalyses the reaction a plastoquinone + NADPH + (n+1) H(+)(in) = a plastoquinol + NADP(+) + n H(+)(out). Its function is as follows. NDH shuttles electrons from NAD(P)H:plastoquinone, via FMN and iron-sulfur (Fe-S) centers, to quinones in the photosynthetic chain and possibly in a chloroplast respiratory chain. The immediate electron acceptor for the enzyme in this species is believed to be plastoquinone. Couples the redox reaction to proton translocation, and thus conserves the redox energy in a proton gradient. This is NAD(P)H-quinone oxidoreductase subunit 2 A, chloroplastic from Oryza sativa subsp. japonica (Rice).